The primary structure comprises 265 residues: H-2 class II histocompatibility antigen, A-D beta chain (265 aa).

The signal sequence occupies residues 1–27 (MALQIPSLLLSAAVVVLMVLSSPRTEG). Residues 28–122 (GNSERHFVVQ…PETSTSLRRL (95 aa)) are beta-1. Residues 28-226 (GNSERHFVVQ…RAQSESARSK (199 aa)) lie on the Extracellular side of the membrane. Intrachain disulfides connect cysteine 42-cysteine 106 and cysteine 145-cysteine 201. Asparagine 46 carries N-linked (GlcNAc...) asparagine glycosylation. The interval 123–216 (EQPNVAISLS…SLKSPITVEW (94 aa)) is beta-2. Residues 125-213 (PNVAISLSRT…EHPSLKSPIT (89 aa)) form the Ig-like C1-type domain. The tract at residues 217 to 226 (RAQSESARSK) is connecting peptide. Residues 227–247 (MLSGIGGCVLGVIFLGLGLFI) form a helical membrane-spanning segment. At 248–265 (RHRSQKGPRGPPPAGLLQ) the chain is on the cytoplasmic side.

The protein belongs to the MHC class II family. Post-translationally, ubiquitinated in immature dendritic cells leading to down-regulation of MHC class II.

It localises to the membrane. This chain is H-2 class II histocompatibility antigen, A-D beta chain (H2-Ab1), found in Mus musculus (Mouse).